The following is a 486-amino-acid chain: Transcription enhancer factor-like protein egl-44 (486 aa).

Positions 47–57 (GTTTPTTTSGG) are enriched in low complexity. The segment at 47–87 (GTTTPTTTSGGQMMTLSPPAGDGPGSAGSMAPESTSSLSDL) is disordered. Positions 88–164 (SGDAEGVWSI…QVLARKKLRD (77 aa)) form a DNA-binding region, TEA. Residues 165-188 (EQAKKKGDIPSLLQQASPPGGVKS) form a disordered region.

In terms of assembly, interacts (via N-terminus) with egl-46 (via C-terminus); the interaction is direct; the interaction may regulate transcription. Interacts with yap-1 (via WW domain); the interaction may regulate transcription. Expressed in HSN neurons in embryos and in the FLP neurons from the L1 stage through to adults. Not expressed in touch cells. Also expressed in larval hypodermis, intestine, pharyngeal muscle and other neurons. In adults expression is lost from some neurons, is weaker in the hypodermis but remains in the intestine. Expressed in HOB neuron, ray neurons RnA and RnB, and the ray structural cell, Rnst; rays are male-specific genital sensilla (simple sense organs).

The protein resides in the nucleus. Its function is as follows. Transcription factor. Binds to DNA sequence motif 5'-CATNNNNAAATGCAT-3' as a heterodimer with egl-46. Represses expression of genes involved in differentiation of touch receptor neurons (TRN), probably acting as a heterodimer with egl-46, perhaps by occupying similar cis-regulatory elements as an unc-86/mec-3 heterodimer. Plays a role in cell fate specification of neurons, including the hook neuron HOB, and touch receptor neurons. Involved in male mating behavior, acting in concert with egl-46, via modulation of expression of polycystins lov-1 and pkd-2, homeodomain protein ceh-26, and neuropeptide-like protein nlp-8. Acts upstream of egl-46 to prevent touch cell differentiation in FLP neurons. Plays a role in neuron differentiation by repressing the expression of zag-1 in FLP neurons, probably acting as a heterodimer with egl-46; because zag-1 represses expression of egl-46 and egl-44, together these proteins form a bistable, negative-feedback loop that regulates the choice between neuronal fates. Also promotes HSN neuron development. In association with egl-46, regulates cell cycle exit in the neuronal Q cell lineage. Plays a role in specifying commissural dendrites of the PVD nociceptive neurons, acting in concert with egl-46. May be involved in thermal stress response downstream of yap-1. This is Transcription enhancer factor-like protein egl-44 (egl-44) from Caenorhabditis elegans.